Reading from the N-terminus, the 468-residue chain is Plant UBX domain-containing protein 7 (468 aa).

Met-1 bears the N-acetylmethionine mark. Residues 7–48 (SGDQQRLVSSFLEIAVGQTAETARQFLQATSWKLEEAIQLFY) form the UBA-like domain. Disordered regions lie at residues 138–168 (KSPG…SAPR) and 299–329 (HFAS…KDEE). Positions 150–166 (SSASASASASASESASA) are enriched in low complexity. Residues 328–347 (EEEEELQRALAASLEDNNMK) form the UIM domain. The region spanning 385–466 (DRSLQCRVGI…GVANSMISAT (82 aa)) is the UBX domain.

Interacts with CDC48A via its UBX domain and with ubiquitin via its N-terminal UBA-like domain. In terms of tissue distribution, expressed broadly in sporophyte and gametophyte cells.

It localises to the nucleus. Its function is as follows. Acts as a bridge between CDC48A and ubiquitin, suggesting a role in targeted protein degradation. The protein is Plant UBX domain-containing protein 7 of Arabidopsis thaliana (Mouse-ear cress).